The sequence spans 144 residues: uncharacterized protein (144 aa).

One can recognise an HIT domain in the interval 4–111 (VFCAIIAGEA…LPPRNGDKLS (108 aa)). A Histidine triad motif motif is present at residues 96 to 100 (HVHLH).

This is an uncharacterized protein from Mycobacterium tuberculosis (strain CDC 1551 / Oshkosh).